The primary structure comprises 360 residues: Heme A synthase (360 aa).

Transmembrane regions (helical) follow at residues Trp29–Leu49, Phe111–Gly131, Leu139–Val159, Leu175–Gly195, Leu210–Ala230, Pro242–Ile262, Val269–Leu289, Ala309–Val329, and Pro330–Val350. A heme-binding site is contributed by His276. His337 contacts heme.

It belongs to the COX15/CtaA family. Type 2 subfamily. As to quaternary structure, interacts with CtaB. The cofactor is heme b.

The protein resides in the cell membrane. The catalysed reaction is Fe(II)-heme o + 2 A + H2O = Fe(II)-heme a + 2 AH2. It participates in porphyrin-containing compound metabolism; heme A biosynthesis; heme A from heme O: step 1/1. Catalyzes the conversion of heme O to heme A by two successive hydroxylations of the methyl group at C8. The first hydroxylation forms heme I, the second hydroxylation results in an unstable dihydroxymethyl group, which spontaneously dehydrates, resulting in the formyl group of heme A. The chain is Heme A synthase from Methylobacterium nodulans (strain LMG 21967 / CNCM I-2342 / ORS 2060).